We begin with the raw amino-acid sequence, 441 residues long: L-seryl-tRNA(Sec) selenium transferase (441 aa).

N6-(pyridoxal phosphate)lysine is present on Lys-283.

Belongs to the SelA family. It depends on pyridoxal 5'-phosphate as a cofactor.

The protein resides in the cytoplasm. It carries out the reaction L-seryl-tRNA(Sec) + selenophosphate + H(+) = L-selenocysteinyl-tRNA(Sec) + phosphate. Its pathway is aminoacyl-tRNA biosynthesis; selenocysteinyl-tRNA(Sec) biosynthesis; selenocysteinyl-tRNA(Sec) from L-seryl-tRNA(Sec) (bacterial route): step 1/1. Its function is as follows. Converts seryl-tRNA(Sec) to selenocysteinyl-tRNA(Sec) required for selenoprotein biosynthesis. This is L-seryl-tRNA(Sec) selenium transferase from Campylobacter concisus (strain 13826).